The sequence spans 306 residues: Ribonuclease Z (306 aa).

The Zn(2+) site is built by His63, His65, Asp67, His68, His140, Asp211, and His269. Asp67 acts as the Proton acceptor in catalysis.

This sequence belongs to the RNase Z family. As to quaternary structure, homodimer. Requires Zn(2+) as cofactor.

It carries out the reaction Endonucleolytic cleavage of RNA, removing extra 3' nucleotides from tRNA precursor, generating 3' termini of tRNAs. A 3'-hydroxy group is left at the tRNA terminus and a 5'-phosphoryl group is left at the trailer molecule.. In terms of biological role, zinc phosphodiesterase, which displays some tRNA 3'-processing endonuclease activity. Probably involved in tRNA maturation, by removing a 3'-trailer from precursor tRNA. The sequence is that of Ribonuclease Z from Listeria monocytogenes serovar 1/2a (strain ATCC BAA-679 / EGD-e).